The chain runs to 283 residues: S-methyl-5'-thioadenosine phosphorylase (283 aa).

T18 is a binding site for phosphate. K51 carries the post-translational modification N6-acetyllysine. Phosphate-binding positions include 60–61 (RH) and 93–94 (TA). M196 contacts substrate. T197 contributes to the phosphate binding site. 220 to 222 (DYD) serves as a coordination point for substrate.

The protein belongs to the PNP/MTAP phosphorylase family. MTAP subfamily. As to quaternary structure, homotrimer. As to expression, ubiquitously expressed.

The protein resides in the cytoplasm. The protein localises to the nucleus. It catalyses the reaction S-methyl-5'-thioadenosine + phosphate = 5-(methylsulfanyl)-alpha-D-ribose 1-phosphate + adenine. It participates in amino-acid biosynthesis; L-methionine biosynthesis via salvage pathway; S-methyl-5-thio-alpha-D-ribose 1-phosphate from S-methyl-5'-thioadenosine (phosphorylase route): step 1/1. With respect to regulation, inhibited by 5'-methylthiotubercin and 5'-chloroformycin. Catalyzes the reversible phosphorylation of S-methyl-5'-thioadenosine (MTA) to adenine and 5-methylthioribose-1-phosphate. Involved in the breakdown of MTA, a major by-product of polyamine biosynthesis. Responsible for the first step in the methionine salvage pathway after MTA has been generated from S-adenosylmethionine. Has broad substrate specificity with 6-aminopurine nucleosides as preferred substrates. This Homo sapiens (Human) protein is S-methyl-5'-thioadenosine phosphorylase.